A 385-amino-acid chain; its full sequence is AA13 family lytic polysaccharide monooxygenase aasA (385 aa).

A signal peptide spans 1–18 (MKSLLALVAGNLVTAVSG). A Cu(2+)-binding site is contributed by H19. H19 carries the post-translational modification Methylhistidine. Positions 19–248 (HGYLTVPASR…AQVYLHCADI (230 aa)) are N-terminal catalytic module. 7 disulfide bridges follow: C40–C43, C66–C245, C102–C203, C118–C145, C153–C161, C167–C173, and C181–C192. Position 109 (H109) interacts with Cu(2+). N-linked (GlcNAc...) asparagine glycosylation occurs at N120. Y242 is a binding site for Cu(2+). Positions 254–276 (SGSSPSPTSTTSTATSTTTPSST) are disordered. The span at 256 to 276 (SSPSPTSTTSTATSTTTPSST) shows a compositional bias: low complexity. Positions 278-385 (CASAISIPVT…TTATESGAWR (108 aa)) constitute a CBM20 domain. N-linked (GlcNAc...) asparagine glycosylation is present at N364.

The protein belongs to the polysaccharide monooxygenase AA13 family. Requires Cu(2+) as cofactor. In terms of processing, the catalytically essential N-terminal histidine His-19 is post-translationally modified by methylation to prevent protonation of the histidine side chain, and protect the critical active site of the enzyme from oxidative damage.

It is found in the secreted. It carries out the reaction starch + reduced acceptor + O2 = D-glucono-1,5-lactone-terminated malto-oligosaccharides + short-chain malto-oligosaccharides + acceptor + H2O.. Functionally, starch-active polysaccharide monooxygenase that oxidizes the C1 position of starch substrates, but not in cellulose, chitin, polygalacturonan or esterified pectin, nor with Arabidopsis stem cell walls. Catalysis by LPMOs requires the reduction of the active-site copper from Cu(II) to Cu(I) by a reducing agent and H(2)O(2) or O(2) as a cosubstrate. This Emericella nidulans (strain FGSC A4 / ATCC 38163 / CBS 112.46 / NRRL 194 / M139) (Aspergillus nidulans) protein is AA13 family lytic polysaccharide monooxygenase aasA.